The primary structure comprises 853 residues: DNA mismatch repair protein MutS (853 aa).

613–620 (GPNMGGKS) contacts ATP.

Belongs to the DNA mismatch repair MutS family.

This protein is involved in the repair of mismatches in DNA. It is possible that it carries out the mismatch recognition step. This protein has a weak ATPase activity. In Vibrio vulnificus (strain YJ016), this protein is DNA mismatch repair protein MutS.